The primary structure comprises 805 residues: Leucine--tRNA ligase (805 aa).

The 'HIGH' region signature appears at 40–51 (PYPSGSGLHVGH). Positions 576-580 (KMSKS) match the 'KMSKS' region motif. An ATP-binding site is contributed by Lys-579.

It belongs to the class-I aminoacyl-tRNA synthetase family.

The protein resides in the cytoplasm. It catalyses the reaction tRNA(Leu) + L-leucine + ATP = L-leucyl-tRNA(Leu) + AMP + diphosphate. This chain is Leucine--tRNA ligase, found in Chlorobium chlorochromatii (strain CaD3).